The primary structure comprises 512 residues: Serine/threonine-protein kinase grp (512 aa).

The 258-residue stretch at 22–279 folds into the Protein kinase domain; the sequence is WTLAQTLGEG…LEKTLDHKWC (258 aa). ATP is bound by residues 28-36 and Lys-51; that span reads LGEGAYGEV. Catalysis depends on Asp-143, which acts as the Proton acceptor. The segment at 335-360 is disordered; sequence PTMRSDDDFNVRLGSGRSKEDGGDRQ.

It belongs to the protein kinase superfamily. CAMK Ser/Thr protein kinase family. NIM1 subfamily. In terms of processing, phosphorylated in a MEI-41/ATR dependent manner in response to DNA damage or the presence of unreplicated DNA.

The protein localises to the nucleus. The catalysed reaction is L-seryl-[protein] + ATP = O-phospho-L-seryl-[protein] + ADP + H(+). It carries out the reaction L-threonyl-[protein] + ATP = O-phospho-L-threonyl-[protein] + ADP + H(+). Functionally, serine/threonine-protein kinase which is required for checkpoint-mediated cell cycle arrest and activation of DNA repair in response to the presence of DNA damage or unreplicated DNA. May also negatively regulate cell cycle progression during unperturbed cell cycles. May phosphorylate the CDC25 phosphatase stg, which promotes its degradation. This results in increased inhibitory tyrosine phosphorylation of Cdk1-cyclin complexes and consequent inhibition of cell cycle progression. The protein is Serine/threonine-protein kinase grp of Drosophila melanogaster (Fruit fly).